A 359-amino-acid chain; its full sequence is ATP-dependent 6-phosphofructokinase 1 (359 aa).

Residues glycine 14, 78–79 (KG), and 115–118 (GDGS) contribute to the ATP site. Aspartate 116 is a Mg(2+) binding site. Substrate-binding positions include 139-141 (TID), arginine 176, 183-185 (MGR), glutamate 236, arginine 277, and 283-286 (HIQR). The active-site Proton acceptor is the aspartate 141.

The protein belongs to the phosphofructokinase type A (PFKA) family. Mixed-substrate PFK group III subfamily. As to quaternary structure, homodimer or homotetramer. Mg(2+) is required as a cofactor.

It localises to the cytoplasm. It carries out the reaction beta-D-fructose 6-phosphate + ATP = beta-D-fructose 1,6-bisphosphate + ADP + H(+). It participates in carbohydrate degradation; glycolysis; D-glyceraldehyde 3-phosphate and glycerone phosphate from D-glucose: step 3/4. In terms of biological role, catalyzes the phosphorylation of D-fructose 6-phosphate to fructose 1,6-bisphosphate by ATP, the first committing step of glycolysis. This Nostoc sp. (strain PCC 7120 / SAG 25.82 / UTEX 2576) protein is ATP-dependent 6-phosphofructokinase 1.